A 324-amino-acid polypeptide reads, in one-letter code: Lactonase drp35 (324 aa).

10 residues coordinate Ca(2+): Glu-47, Ser-109, Gly-111, Asp-129, Thr-132, Tyr-134, Asp-137, Asn-184, Asp-235, and Ser-236. The active-site Proton donor is Asp-235.

Belongs to the SMP-30/CGR1 family. The cofactor is Ca(2+).

It is found in the cytoplasm. In terms of biological role, exhibits lactonase activity. Acts in cells with perturbed membrane integrity and is possibly related to the membrane homeostasis. This Staphylococcus aureus (strain bovine RF122 / ET3-1) protein is Lactonase drp35 (drp35).